The chain runs to 328 residues: Renalase (328 aa).

FAD contacts are provided by residues alanine 13, 32 to 33 (DK), arginine 40, and 56 to 57 (QY). Residues 57-61 (YFTAR) and 96-98 (SPD) each bind substrate. Residue isoleucine 128 coordinates FAD. Threonine 185 serves as a coordination point for substrate. An FAD-binding site is contributed by aspartate 302. A substrate-binding site is contributed by arginine 308. Residue valine 309 participates in FAD binding.

It belongs to the bacterial renalase family. FAD is required as a cofactor.

The catalysed reaction is 1,2-dihydro-beta-NAD + O2 + H(+) = H2O2 + NAD(+). The enzyme catalyses 1,2-dihydro-beta-NADP + O2 + H(+) = H2O2 + NADP(+). It carries out the reaction 1,6-dihydro-beta-NADP + O2 + H(+) = H2O2 + NADP(+). It catalyses the reaction 1,6-dihydro-beta-NAD + O2 + H(+) = H2O2 + NAD(+). Its function is as follows. Catalyzes the oxidation of the 1,2-dihydro- and 1,6-dihydro- isomeric forms of beta-NAD(P) back to beta-NAD(P)+. Has a preference for 1,2-dihydro-beta-NAD as substrate. May serve to protect primary metabolism dehydrogenases from inhibition by the 1,2-dihydro- and 1,6-dihydro-beta-NAD(P) isomers. The sequence is that of Renalase from Pseudomonas savastanoi pv. phaseolicola (strain 1448A / Race 6) (Pseudomonas syringae pv. phaseolicola (strain 1448A / Race 6)).